Reading from the N-terminus, the 89-residue chain is Phosphocarrier protein HPr (89 aa).

The 88-residue stretch at 1–88 (MLEHELIVTN…ELFENRFNED (88 aa)) folds into the HPr domain. H15 (pros-phosphohistidine intermediate) is an active-site residue. At S46 the chain carries Phosphoserine; by HPrK/P.

The protein belongs to the HPr family.

The protein localises to the cytoplasm. Its activity is regulated as follows. Phosphorylation on Ser-46 inhibits the phosphoryl transfer from enzyme I to HPr. Its function is as follows. General (non sugar-specific) component of the phosphoenolpyruvate-dependent sugar phosphotransferase system (sugar PTS). This major carbohydrate active-transport system catalyzes the phosphorylation of incoming sugar substrates concomitantly with their translocation across the cell membrane. The phosphoryl group from phosphoenolpyruvate (PEP) is transferred to the phosphoryl carrier protein HPr by enzyme I. Phospho-HPr then transfers it to the PTS EIIA domain. In Xylella fastidiosa (strain 9a5c), this protein is Phosphocarrier protein HPr (ptsH).